The sequence spans 423 residues: 58 kDa phosphoprotein (423 aa).

Positions K46 to E60 are enriched in basic and acidic residues. Residues K46–E82 form a disordered region. Residues K61–E82 are compositionally biased toward acidic residues. TPR repeat units lie at residues I113 to S146, A147 to S180, and A181 to E214. The tract at residues K260 to G301 is disordered. Residues E264–Y276 are compositionally biased toward basic and acidic residues. A 19 X 3-4 AA approximate repeats region spans residues G292–P362. Residues M361 to P423 form the STI1 domain.

It localises to the cytoplasm. Its function is as follows. May play a role in protein folding or protein-protein interactions. May act as a co-chaperone. This Plasmodium berghei protein is 58 kDa phosphoprotein.